Here is a 265-residue protein sequence, read N- to C-terminus: Type III pantothenate kinase (265 aa).

6–13 (DVGNTHTV) lines the ATP pocket. 112 to 115 (GADR) provides a ligand contact to substrate. Catalysis depends on aspartate 114, which acts as the Proton acceptor. Aspartate 134 is a K(+) binding site. Threonine 137 lines the ATP pocket. Residue threonine 189 participates in substrate binding.

This sequence belongs to the type III pantothenate kinase family. Homodimer. It depends on NH4(+) as a cofactor. K(+) serves as cofactor.

The protein resides in the cytoplasm. The enzyme catalyses (R)-pantothenate + ATP = (R)-4'-phosphopantothenate + ADP + H(+). It functions in the pathway cofactor biosynthesis; coenzyme A biosynthesis; CoA from (R)-pantothenate: step 1/5. Its function is as follows. Catalyzes the phosphorylation of pantothenate (Pan), the first step in CoA biosynthesis. In Streptomyces griseus subsp. griseus (strain JCM 4626 / CBS 651.72 / NBRC 13350 / KCC S-0626 / ISP 5235), this protein is Type III pantothenate kinase.